The chain runs to 33 residues: Dermaseptin-H9 (33 aa).

Residue Leu33 is modified to Leucine amide.

Belongs to the frog skin active peptide (FSAP) family. Dermaseptin subfamily. Expressed by the skin glands.

Its subcellular location is the secreted. Its function is as follows. Has antimicrobial activity. In Pithecopus hypochondrialis (Orange-legged leaf frog), this protein is Dermaseptin-H9.